Reading from the N-terminus, the 414-residue chain is MVKVEVLGMILAGGQGSRLYPLTAKRAKPAVPFGAKYRIIDFVLNNFVNSGIYAIYVLTQYKAQSLTEHIQRYWRFGAFLEDHFILLVPAQMYRYEELGPVWYRGTADAIYQNLHLVHNHAPKAVAVFGGDHIFKMNIRHMVEYHYDTRADITIAAYPVPVAEATRFGVLQVDEEWRITEFQEKPEEPKPIPGRPDMALASMGNYIFRTEALFELLEADARDETSAHDFGKGVIPRAIRVGYRVYAYDFHRNPIPGQEGPNLYWRDVGTLDAYYEASMDLVKVDPVFGLCSPVWPLRTANLFSPPAKFVHETGERVGRALNSLLAGGVIVSGGTVRESVLFRRVRVNSYSLVERSVLFDDVEVGRYCRIRNAIIDKNVKIPPHTEIGYDLELDRARGFTVTPEGVVVVPKGYRF.

Alpha-D-glucose 1-phosphate contacts are provided by residues Y103, G168, 183–184, and S201; that span reads EK.

It belongs to the bacterial/plant glucose-1-phosphate adenylyltransferase family. As to quaternary structure, homotetramer.

It carries out the reaction alpha-D-glucose 1-phosphate + ATP + H(+) = ADP-alpha-D-glucose + diphosphate. Its pathway is glycan biosynthesis; glycogen biosynthesis. Its function is as follows. Involved in the biosynthesis of ADP-glucose, a building block required for the elongation reactions to produce glycogen. Catalyzes the reaction between ATP and alpha-D-glucose 1-phosphate (G1P) to produce pyrophosphate and ADP-Glc. The protein is Glucose-1-phosphate adenylyltransferase of Thermus caldophilus.